A 207-amino-acid chain; its full sequence is Holliday junction branch migration complex subunit RuvA (207 aa).

Residues 1–64 (MIGRLTGILA…ETSQQLFGFS (64 aa)) are domain I. The tract at residues 65-142 (SQQDRELFRM…ALDTTPSEHS (78 aa)) is domain II. A flexible linker region spans residues 143–157 (PTGEGAGIVRVDPVI). The tract at residues 158–207 (NTNVIIADAESALIGLGYKPTEAAKAVSAAYNDTITTSEDLIRAALKGMI) is domain III.

This sequence belongs to the RuvA family. Homotetramer. Forms an RuvA(8)-RuvB(12)-Holliday junction (HJ) complex. HJ DNA is sandwiched between 2 RuvA tetramers; dsDNA enters through RuvA and exits via RuvB. An RuvB hexamer assembles on each DNA strand where it exits the tetramer. Each RuvB hexamer is contacted by two RuvA subunits (via domain III) on 2 adjacent RuvB subunits; this complex drives branch migration. In the full resolvosome a probable DNA-RuvA(4)-RuvB(12)-RuvC(2) complex forms which resolves the HJ.

It is found in the cytoplasm. In terms of biological role, the RuvA-RuvB-RuvC complex processes Holliday junction (HJ) DNA during genetic recombination and DNA repair, while the RuvA-RuvB complex plays an important role in the rescue of blocked DNA replication forks via replication fork reversal (RFR). RuvA specifically binds to HJ cruciform DNA, conferring on it an open structure. The RuvB hexamer acts as an ATP-dependent pump, pulling dsDNA into and through the RuvAB complex. HJ branch migration allows RuvC to scan DNA until it finds its consensus sequence, where it cleaves and resolves the cruciform DNA. This is Holliday junction branch migration complex subunit RuvA from Saccharophagus degradans (strain 2-40 / ATCC 43961 / DSM 17024).